An 89-amino-acid polypeptide reads, in one-letter code: UPF0298 protein GTNG_0961 (89 aa).

This sequence belongs to the UPF0298 family.

It is found in the cytoplasm. The polypeptide is UPF0298 protein GTNG_0961 (Geobacillus thermodenitrificans (strain NG80-2)).